We begin with the raw amino-acid sequence, 407 residues long: Membrane protein MosC (407 aa).

A disordered region spans residues 1–24 (MTRTSPRHHAPSETKRRVPMGGVH). A run of 11 helical transmembrane segments spans residues 31–51 (LTITAVAFQFFINGLVLAAWA), 69–89 (GVLLLIMAAGALLFMSLAGYF), 109–129 (ALVLIFAAPNCMTFLCSIVLF), 157–177 (AFLHGCSSTGILAGIMTFGVI), 186–206 (SVTLLTGILIVARWLFPHLLD), 225–245 (LLMFGILSFLTMVTDGAIAEW), 255–275 (QVTDQVGSLGYVAFTLLMIAG), 290–310 (ALIAISGSLASAGMTTALFMP), 316–336 (LAGFALLGLGMANLVPIIFSE), 347–367 (VGLTFVSVCGYSGFLVGPPII), and 377–397 (GRALLFIIAVGVIVACASVFF).

It is found in the cell membrane. Its function is as follows. May be a membrane transport protein that could either transport a precursor for rhizopine biosynthesis into bacteroids or the finished product from the bacteroids. This chain is Membrane protein MosC (mosC), found in Rhizobium meliloti (Ensifer meliloti).